A 687-amino-acid chain; its full sequence is Phenylalanine aminomutase (L-beta-phenylalanine forming) (687 aa).

The Proton donor/acceptor role is filled by Tyr-80. A cross-link (5-imidazolinone (Ala-Gly)) is located at residues 175–177 (ASG). A 2,3-didehydroalanine (Ser) modification is found at Ser-176. The (E)-cinnamate site is built by Asn-231, Gln-319, Arg-325, Asn-355, Lys-427, Glu-455, and Asn-458.

Belongs to the PAL/histidase family. As to quaternary structure, homodimer. Homotetramer, dimer of dimers. Post-translationally, contains an active site 4-methylidene-imidazol-5-one (MIO), which is formed autocatalytically by cyclization and dehydration of residues Ala-Ser-Gly.

The protein localises to the cytoplasm. The enzyme catalyses L-phenylalanine = L-beta-phenylalanine. The catalysed reaction is L-phenylalanine = (E)-cinnamate + NH4(+). It functions in the pathway alkaloid biosynthesis; taxol biosynthesis. Its pathway is phenylpropanoid metabolism; trans-cinnamate biosynthesis; trans-cinnamate from L-phenylalanine: step 1/1. Its function is as follows. Phenylalanine aminomutase that catalyzes the rearrangement of L-phenylalanine to R-beta-phenylalanine. Catalyzes the first committed step in the biosynthesis of the side chain of the alkaloid taxol (paclitaxel), a widely-used compound with antitumor activity. Also has low phenylalanine ammonia-lyase activity and can catalyze the amination of trans-cinnamate. This is Phenylalanine aminomutase (L-beta-phenylalanine forming) (pam) from Taxus chinensis (Chinese yew).